A 432-amino-acid chain; its full sequence is Serine--tRNA ligase (432 aa).

Residue threonine 238–glutamate 240 coordinates L-serine. Arginine 269 to glutamate 271 is an ATP binding site. Glutamate 292 serves as a coordination point for L-serine. An ATP-binding site is contributed by glutamate 356–serine 359. L-serine is bound at residue serine 392.

It belongs to the class-II aminoacyl-tRNA synthetase family. Type-1 seryl-tRNA synthetase subfamily. Homodimer. The tRNA molecule binds across the dimer.

Its subcellular location is the cytoplasm. It carries out the reaction tRNA(Ser) + L-serine + ATP = L-seryl-tRNA(Ser) + AMP + diphosphate + H(+). The enzyme catalyses tRNA(Sec) + L-serine + ATP = L-seryl-tRNA(Sec) + AMP + diphosphate + H(+). It participates in aminoacyl-tRNA biosynthesis; selenocysteinyl-tRNA(Sec) biosynthesis; L-seryl-tRNA(Sec) from L-serine and tRNA(Sec): step 1/1. Its function is as follows. Catalyzes the attachment of serine to tRNA(Ser). Is also able to aminoacylate tRNA(Sec) with serine, to form the misacylated tRNA L-seryl-tRNA(Sec), which will be further converted into selenocysteinyl-tRNA(Sec). In Buchnera aphidicola subsp. Baizongia pistaciae (strain Bp), this protein is Serine--tRNA ligase.